The chain runs to 361 residues: ETS translocation variant 3-like protein (361 aa).

The ETS DNA-binding region spans 39–120 (IQLWHFILEL…KGKRFTYKFN (82 aa)). The segment at 178–201 (LTGQQTPRGPPETSGDKKGSSSSV) is disordered.

This sequence belongs to the ETS family.

It localises to the nucleus. In terms of biological role, transcriptional regulator. The chain is ETS translocation variant 3-like protein (ETV3L) from Homo sapiens (Human).